Consider the following 372-residue polypeptide: Transaldolase 2 (372 aa).

Residue lysine 140 is the Schiff-base intermediate with substrate of the active site.

The protein belongs to the transaldolase family. Type 2 subfamily.

It localises to the cytoplasm. It catalyses the reaction D-sedoheptulose 7-phosphate + D-glyceraldehyde 3-phosphate = D-erythrose 4-phosphate + beta-D-fructose 6-phosphate. The protein operates within carbohydrate degradation; pentose phosphate pathway; D-glyceraldehyde 3-phosphate and beta-D-fructose 6-phosphate from D-ribose 5-phosphate and D-xylulose 5-phosphate (non-oxidative stage): step 2/3. Transaldolase is important for the balance of metabolites in the pentose-phosphate pathway. The protein is Transaldolase 2 of Streptomyces avermitilis (strain ATCC 31267 / DSM 46492 / JCM 5070 / NBRC 14893 / NCIMB 12804 / NRRL 8165 / MA-4680).